Here is a 60-residue protein sequence, read N- to C-terminus: Large ribosomal subunit protein bL32 (60 aa).

The protein belongs to the bacterial ribosomal protein bL32 family.

This Thermosipho melanesiensis (strain DSM 12029 / CIP 104789 / BI429) protein is Large ribosomal subunit protein bL32.